Here is a 611-residue protein sequence, read N- to C-terminus: Protein Pixie (611 aa).

4Fe-4S ferredoxin-type domains follow at residues 15–45 (RIAIVSDDKCKPKRCRQECKKTCPVVRMGKL) and 54–83 (KIASLSEELCIGCGICVKKCPFEAITIINL). 2 consecutive ABC transporter domains span residues 78 to 323 (ITII…FLDG) and 350 to 570 (IKRM…LELL). ATP-binding positions include 118–125 (GQNGIGKS) and 387–394 (GENGTGKT).

Belongs to the ABC transporter superfamily. ABCE family. Interacts with components of eIF3 complex, namely eIF3a, eIF3j, eIF3b, eIF3c and eIF3i. Associates with the 40S ribosome subunit in an ATP-dependent manner and independently from the presence of the eIF3 complex. Forms a complex with Git and Pak; the interaction with Pak may be mediated by pix/dPIX. Ubiquitinated by Cnot4. Ubiquitination mediates the recruitment of autophagy receptors to the mitochondrial outer membrane and initiates mitophagy. As to expression, expressed in early and late larval imaginal disks (at protein level).

The protein localises to the cytoplasm. Functionally, plays a role in translation initiation and quality control of translation. Together with pelo and HBS1, is required for 48S complex formation from 80S ribosomes and dissociation of vacant 80S ribosomes. Stabilizes core components of eIF3 complex promoting their assembly into translation initiation-competent complexes. Together with pelo and HBS1, recognizes stalled ribosomes and promotes dissociation of elongation complexes assembled on non-stop mRNAs; this triggers endonucleolytic cleavage of the mRNA, a mechanism to release non-functional ribosomes and to degrade damaged mRNAs as part of the No-Go Decay (NGD) pathway. Plays a role in the regulation of mRNA turnover. Plays a role in quality control of translation of mitochondrial outer membrane-localized mRNA. As part of the Pink1-regulated signaling, ubiquitinated by Cnot4 upon mitochondria damage; this modification generates polyubiquitin signals that recruits autophagy receptors to the mitochondrial outer membrane to initiate mitophagy. Required in the wing disk for cell division and growth as well as cell survival. During muscle embryogenesis, required for the recruitment of Pak to muscle attachments in the embryo, hence may play a role in proper muscle morphogenesis and proper guidance and targeting of subsets of myotubes. The chain is Protein Pixie from Drosophila melanogaster (Fruit fly).